A 292-amino-acid chain; its full sequence is Putative ribonuclease 3 (292 aa).

The RNase III domain maps to 32–158 (LGMSDEYIPY…FFGATEWLID (127 aa)). The region spanning 204–276 (DAKTRFNEVI…ASRALETLAL (73 aa)) is the DRBM domain.

It belongs to the IIV-6 142R family.

The catalysed reaction is Endonucleolytic cleavage to 5'-phosphomonoester.. In terms of biological role, digests double-stranded RNA. This chain is Putative ribonuclease 3, found in Acheta domesticus (House cricket).